The chain runs to 500 residues: Glutamate--tRNA ligase (500 aa).

Positions 13-23 (PSPTGTPHVGM) match the 'HIGH' region motif. A 'KMSKS' region motif is present at residues 258 to 262 (KLSKR). ATP is bound at residue Lys261.

Belongs to the class-I aminoacyl-tRNA synthetase family. Glutamate--tRNA ligase type 1 subfamily. As to quaternary structure, monomer.

The protein resides in the cytoplasm. The enzyme catalyses tRNA(Glu) + L-glutamate + ATP = L-glutamyl-tRNA(Glu) + AMP + diphosphate. Catalyzes the attachment of glutamate to tRNA(Glu) in a two-step reaction: glutamate is first activated by ATP to form Glu-AMP and then transferred to the acceptor end of tRNA(Glu). The sequence is that of Glutamate--tRNA ligase from Corynebacterium jeikeium (strain K411).